The sequence spans 622 residues: DNA mismatch repair protein MutL (622 aa).

The disordered stretch occupies residues 376 to 401 (REVREGSSTGRAGNYQPPEPPSREAM).

Belongs to the DNA mismatch repair MutL/HexB family.

This protein is involved in the repair of mismatches in DNA. It is required for dam-dependent methyl-directed DNA mismatch repair. May act as a 'molecular matchmaker', a protein that promotes the formation of a stable complex between two or more DNA-binding proteins in an ATP-dependent manner without itself being part of a final effector complex. This chain is DNA mismatch repair protein MutL, found in Aeromonas hydrophila subsp. hydrophila (strain ATCC 7966 / DSM 30187 / BCRC 13018 / CCUG 14551 / JCM 1027 / KCTC 2358 / NCIMB 9240 / NCTC 8049).